The chain runs to 41 residues: Photosystem I reaction center subunit IX (41 aa).

Residues 7–27 (YLSTVPVVFAIWLTFTAGLII) form a helical membrane-spanning segment.

It belongs to the PsaJ family.

It is found in the plastid. Its subcellular location is the chloroplast thylakoid membrane. May help in the organization of the PsaE and PsaF subunits. This Bigelowiella natans (Pedinomonas minutissima) protein is Photosystem I reaction center subunit IX.